The following is a 392-amino-acid chain: Glyceraldehyde-3-phosphate dehydrogenase A, chloroplastic (392 aa).

Residues 1–56 constitute a chloroplast transit peptide; sequence NSSLQVSNKGFSEFSGLRTSSAIPFGRKTNDDLLSVVAFQTSVIGGGNSKRGVVEA. NADP(+) contacts are provided by residues 67 to 68, Asp91, and Arg136; that span reads RI. Residues 208–210, Thr239, Arg254, 267–268, and Arg290 contribute to the D-glyceraldehyde 3-phosphate site; these read SCT and TG. The Nucleophile role is filled by Cys209. Asn372 contributes to the NADP(+) binding site.

This sequence belongs to the glyceraldehyde-3-phosphate dehydrogenase family. In terms of assembly, tetramer of either four A chains (GAPDH 2) or two A and two B chains (GAPDH 1).

It is found in the plastid. The protein localises to the chloroplast. It carries out the reaction D-glyceraldehyde 3-phosphate + phosphate + NADP(+) = (2R)-3-phospho-glyceroyl phosphate + NADPH + H(+). It participates in carbohydrate biosynthesis; Calvin cycle. The sequence is that of Glyceraldehyde-3-phosphate dehydrogenase A, chloroplastic (GAPA) from Nicotiana tabacum (Common tobacco).